The following is a 358-amino-acid chain: Histidinol-phosphate aminotransferase (358 aa).

Lys-218 carries the N6-(pyridoxal phosphate)lysine modification.

This sequence belongs to the class-II pyridoxal-phosphate-dependent aminotransferase family. Histidinol-phosphate aminotransferase subfamily. As to quaternary structure, homodimer. Requires pyridoxal 5'-phosphate as cofactor.

The catalysed reaction is L-histidinol phosphate + 2-oxoglutarate = 3-(imidazol-4-yl)-2-oxopropyl phosphate + L-glutamate. It functions in the pathway amino-acid biosynthesis; L-histidine biosynthesis; L-histidine from 5-phospho-alpha-D-ribose 1-diphosphate: step 7/9. The chain is Histidinol-phosphate aminotransferase from Dehalococcoides mccartyi (strain CBDB1).